The primary structure comprises 335 residues: D-arabinose 1-dehydrogenase (335 aa).

Tyrosine 58 serves as the catalytic Proton donor. Position 124 (histidine 124) interacts with substrate. Residue 221–287 coordinates NAD(+); sequence SLLRSQETRQ…VSSMEELKLA (67 aa).

Belongs to the aldo/keto reductase family. Aldo/keto reductase 2 subfamily.

It catalyses the reaction D-arabinose + NAD(+) = D-arabinono-1,4-lactone + NADH + H(+). The chain is D-arabinose 1-dehydrogenase (ARA2) from Saccharomyces cerevisiae (strain ATCC 204508 / S288c) (Baker's yeast).